A 300-amino-acid polypeptide reads, in one-letter code: MNRAFNRKKDKSWMHTPEALAKHFIPYNAKFLGNTEVDQPKGTEVVKDAVRKLKFQRHIKKSEGQKLPKVELQISIYGVKILDPKSKEVQYNCQLHRISFCADDKTDKRIFTFICKDSESNKHLCYVFDSEKCAEEITLTIGQAFDLAYKKFLESGGKDVETRKQIGGLQKRIQDLETENVELKKQLQVLEEQLMIAQVPPGNSMSSKSPTDIFDMVPFSPMTPLVPLPASNGSAPPPPARPTEIRRDLFGAEPFDPFTCGAADFPPDIQSKLDEMQEGFKMGLTVEGTVFSLDPLEGRC.

The PID domain occupies 21 to 176 (AKHFIPYNAK…GGLQKRIQDL (156 aa)). Residues 160–199 (VETRKQIGGLQKRIQDLETENVELKKQLQVLEEQLMIAQV) adopt a coiled-coil conformation.

It belongs to the ced-6 family.

It localises to the cytoplasm. Functionally, may function as an adapter protein. Required for efficient phagocytosis of apoptotic cells. May play a role in the internalization and endosomal trafficking of various lrp1 ligands. The chain is PTB domain-containing engulfment adapter protein 1 (gulp1) from Danio rerio (Zebrafish).